The chain runs to 811 residues: Phenylalanine--tRNA ligase beta subunit (811 aa).

Positions 39 to 151 constitute a tRNA-binding domain; the sequence is RTWAAGVVVG…AGLQAGQPVG (113 aa). The B5 domain maps to 409 to 495; that stretch reads EPEHSITLRL…RLYGYDNFGE (87 aa). The Mg(2+) site is built by Asp-473, Asp-479, Glu-482, and Glu-483. An FDX-ACB domain is found at 717 to 810; that stretch reads SSFPASDRDL…LVERFRVTLR (94 aa).

This sequence belongs to the phenylalanyl-tRNA synthetase beta subunit family. Type 1 subfamily. Tetramer of two alpha and two beta subunits. Requires Mg(2+) as cofactor.

The protein resides in the cytoplasm. It catalyses the reaction tRNA(Phe) + L-phenylalanine + ATP = L-phenylalanyl-tRNA(Phe) + AMP + diphosphate + H(+). In Synechococcus sp. (strain ATCC 27144 / PCC 6301 / SAUG 1402/1) (Anacystis nidulans), this protein is Phenylalanine--tRNA ligase beta subunit.